The primary structure comprises 341 residues: Putative UPF0607 protein ENSP00000383783 (341 aa).

Residues glutamate 75–arginine 101 show a composition bias toward basic and acidic residues. Disordered stretches follow at residues glutamate 75–leucine 115 and glycine 216–alanine 278. Low complexity predominate over residues serine 234–histidine 245.

The protein belongs to the UPF0607 family.

This chain is Putative UPF0607 protein ENSP00000383783, found in Homo sapiens (Human).